A 645-amino-acid polypeptide reads, in one-letter code: ATP-dependent DNA helicase Rep (645 aa).

One can recognise a UvrD-like helicase ATP-binding domain in the interval 1–280 (MSLNFSQKNA…IKMEHNYRSS (280 aa)). ATP-binding positions include 22–29 (AGAGSGKT) and Arg-278. The 282-residue stretch at 281–562 (GRILKAANSL…QLMTLHASKG (282 aa)) folds into the UvrD-like helicase C-terminal domain.

This sequence belongs to the helicase family. UvrD subfamily. As to quaternary structure, homodimer.

The catalysed reaction is Couples ATP hydrolysis with the unwinding of duplex DNA by translocating in the 3'-5' direction.. The enzyme catalyses ATP + H2O = ADP + phosphate + H(+). Functionally, rep helicase is a single-stranded DNA-dependent ATPase involved in DNA replication; it can initiate unwinding at a nick in the DNA. It binds to the single-stranded DNA and acts in a progressive fashion along the DNA in the 3' to 5' direction. In Buchnera aphidicola subsp. Acyrthosiphon pisum (strain APS) (Acyrthosiphon pisum symbiotic bacterium), this protein is ATP-dependent DNA helicase Rep.